A 74-amino-acid polypeptide reads, in one-letter code: Serine rich endogenous peptide 23 (74 aa).

The N-terminal stretch at 1–25 (MNKVVVYVLALSILLFFGLPNTTLA) is a signal peptide. Positions 52 to 66 (KIAVGGSDSVRAHSK) match the SCOOP motif motif. The SxS motif essential for MIK2 binding motif lies at 58 to 60 (SDS).

This sequence belongs to the serine rich endogenous peptide (SCOOP) phytocytokine family. Interacts with MIK2 (via extracellular leucine-rich repeat domain); this interaction triggers the formation of complex between MIK2 and the BAK1/SERK3 and SERK4 coreceptors, and subsequent BAK1 activation by phosphorylation. In terms of tissue distribution, mostly expressed in roots, and, to a lower extent, in seedlings shoots.

It is found in the cell membrane. It localises to the secreted. The protein resides in the extracellular space. Its subcellular location is the apoplast. Brassicaceae-specific phytocytokine (plant endogenous peptide released into the apoplast) perceived by MIK2 in a BAK1/SERK3 and SERK4 coreceptors-dependent manner, that modulates various physiological and antimicrobial processes including growth prevention and reactive oxygen species (ROS) response regulation. Inhibits root growth. This Arabidopsis thaliana (Mouse-ear cress) protein is Serine rich endogenous peptide 23.